The following is an 83-amino-acid chain: MCGYYGNYYGGLGCGSYSYGGLGCGYGSCYGSGFRRLGCGYGCGYGYGSRSLCGSGYGYGSRSLCGSGYGCGSGYGSGFGYYY.

The stretch at 9–15 (YGGLGCG) is one RPT 1-1 repeat. One copy of the RPT 1-2 repeat lies at 19 to 25 (YGGLGCG). Residues 44–55 (GYGYGSRSLCGS) form an RPT 2-1 repeat. The stretch at 56-67 (GYGYGSRSLCGS) is one RPT 2-2 repeat.

This sequence belongs to the KRTAP type 6 family. In terms of assembly, interacts with wool keratins.

Functionally, in the wool cortex, wool keratin intermediate filaments are embedded in an interfilamentous matrix, consisting of hair keratin-associated proteins (KRTAP), which are essential for the formation of a rigid and resistant wool shaft through their extensive disulfide bond cross-linking with abundant cysteine residues of wool keratins. The matrix proteins include the high-sulfur and high-glycine-tyrosine keratins. This chain is Keratin-associated protein 6-1 (KRTAP6-1), found in Ovis aries (Sheep).